The sequence spans 1782 residues: A-kinase anchor protein 12 (1782 aa).

8 disordered regions span residues 1 to 53, 71 to 169, 189 to 400, 421 to 886, 938 to 1089, 1105 to 1134, 1157 to 1274, and 1305 to 1355; these read MGAG…DPAT, QDEL…QAND, KTEK…APLA, VSTV…ELSE, EREV…LKKE, PFTQ…ESSE, AIPP…ADEK, and KGEG…HVNE. A lipid anchor (N-myristoyl glycine) is attached at G2. Phosphoserine occurs at positions 11, 19, 28, 75, and 96. Positions 16-53 are enriched in low complexity; that stretch reads PEGSSTPAEPEPSGGGPSAEAAPDTTADPAIAASDPAT. Positions 108-125 are enriched in basic and acidic residues; it reads GQRDSEDVSKRDSDKEMA. The span at 145–154 shows a compositional bias: low complexity; that stretch reads IIEQIPSSES. S154 is modified (phosphoserine). The segment covering 157–168 has biased composition (polar residues); the sequence is EELTQPTESQAN. S219, S248, S258, S280, S283, S286, S347, and S371 each carry phosphoserine. The span at 226 to 249 shows a compositional bias: basic and acidic residues; the sequence is ASKESEPKQSTEKPEETLKREQSH. The interval 266-557 is involved in PKC-binding; it reads KEEGEEKQEK…TQVPADSPDS (292 aa). Composition is skewed to basic and acidic residues over residues 315–347 and 363–379; these read KPKE…EVAS and ESAH…KVEL. Y374 is modified (phosphotyrosine). S381 and S392 each carry phosphoserine. The segment covering 423-435 has biased composition (basic and acidic residues); it reads TVEERTEEQKTEV. The segment covering 446 to 456 has biased composition (acidic residues); it reads ELVEMDAEPQE. Over residues 458–468 the composition is skewed to basic and acidic residues; sequence EPAKELVKLKE. Phosphoserine is present on residues S483 and S505. The segment covering 528–537 has biased composition (basic residues); the sequence is LSGKKQKGKR. Phosphoserine is present on residues S554, S557, S598, S612, S627, and S629. The short motif at 607-627 is the AKAP CaM-binding 1 element; that stretch reads VTPWASFKKMVTPKKRVRRPS. Positions 625–639 are enriched in basic and acidic residues; that stretch reads RPSESDKEDELDKVK. The segment covering 640 to 652 has biased composition (low complexity); sequence SATLSSTESTASE. T642 is subject to Phosphothreonine. Phosphoserine occurs at positions 644, 645, 648, and 651. A compositionally biased stretch (basic and acidic residues) spans 655 to 674; the sequence is EEMKGSVEEPKPEEPKRKVD. S696, S697, and S698 each carry phosphoserine. The span at 708-724 shows a compositional bias: basic and acidic residues; sequence GGDHQKADEAGKDKETG. Residues 739–749 are compositionally biased toward polar residues; that stretch reads QGSSSPEQAGS. S749, S761, and S787 each carry phosphoserine. An AKAP CaM-binding 2 motif is present at residues 756-776; it reads VSTWESFKRLVTPRKKSKSKL. A compositionally biased stretch (basic and acidic residues) spans 792-803; the sequence is STPDTEPGKEES. Residues 801–821 carry the AKAP CaM-binding 3 motif; that stretch reads EESWVSIKKFIPGRRKKRPDG. Phosphoserine is present on S806. Positions 986 to 997 are enriched in low complexity; sequence GAEEGTEASAAE. K1051 participates in a covalent cross-link: Glycyl lysine isopeptide (Lys-Gly) (interchain with G-Cter in SUMO1). Residues 1072 to 1089 show a composition bias toward basic and acidic residues; it reads AEAERPEEQAEASGLKKE. The span at 1164–1174 shows a compositional bias: polar residues; the sequence is ETPTDSETDGS. 2 stretches are compositionally biased toward basic and acidic residues: residues 1187–1198 and 1231–1251; these read QKDEIVEIHEEN and EETK…KEVS. The segment covering 1253-1267 has biased composition (polar residues); the sequence is ETVSILSKTEGTQEA. Residues S1328 and S1331 each carry the phosphoserine modification. Over residues 1333–1355 the composition is skewed to basic and acidic residues; that stretch reads VEREMVVQVEREKTEAEPTHVNE. Residues S1391 and S1395 each carry the phosphoserine modification. Positions 1541-1554 are RII-binding; sequence ELETKSSKLVQNII. The disordered stretch occupies residues 1584 to 1782; it reads KADSQDAGQE…ESAKSELTES (199 aa). Phosphoserine is present on S1587. Over residues 1603–1612 the composition is skewed to polar residues; the sequence is ASAQDETPIT. Basic and acidic residues-rich tracts occupy residues 1629 to 1639 and 1675 to 1699; these read DISKDMSEASE and VPED…KEDE. A Phosphoserine modification is found at S1727. Composition is skewed to basic and acidic residues over residues 1734–1757 and 1766–1782; these read KQKE…ESDK and ELQK…LTES.

In terms of assembly, binds to dimeric RII-alpha regulatory subunit of PKC. As to expression, expressed in endothelial cells, cultured fibroblasts and osteosarcoma, but not in platelets, leukocytes, monocytic cell lines or peripherical blood cells.

Its subcellular location is the cytoplasm. It is found in the cell cortex. It localises to the cytoskeleton. The protein localises to the membrane. Functionally, anchoring protein that mediates the subcellular compartmentation of protein kinase A (PKA) and protein kinase C (PKC). This chain is A-kinase anchor protein 12 (AKAP12), found in Homo sapiens (Human).